We begin with the raw amino-acid sequence, 447 residues long: Thiol-specific monooxygenase (447 aa).

FAD contacts are provided by residues 13-17 (GAGPS), E38, 46-47 (VW), 91-92 (NT), and 137-138 (DV). 90–91 (TN) contributes to the NADP(+) binding site. An NADP(+)-binding site is contributed by 223 to 226 (SAND).

The protein belongs to the FMO family. As to quaternary structure, monomer. FAD serves as cofactor.

Flavin-dependent oxidation of thiol-containing compounds. Probably required for the correct folding of disulfide-bonded proteins. This is Thiol-specific monooxygenase (fmo1) from Schizosaccharomyces pombe (strain 972 / ATCC 24843) (Fission yeast).